Consider the following 272-residue polypeptide: Short-chain dehydrogenase srdC (272 aa).

Residues I15, D65, R127, Y173, K177, V206, and T208 each coordinate NADP(+). Y173 serves as the catalytic Proton donor. K177 functions as the Lowers pKa of active site Tyr in the catalytic mechanism.

Belongs to the short-chain dehydrogenases/reductases (SDR) family.

In terms of biological role, short-chain dehydrogenase; part of the gene cluster that mediates the biosynthesis of sordarial, a salicylic aldehyde structurally related to the phytotoxin pyriculol. The most interesting aspect of this pathway is formation of an aromatic product from the highly reducing polyketide synthase srdA. SrdA synthesizes a reduced polyketide chain from one molecule of acetyl-CoA and five molecules of malonyl-CoA. The polyketide chain is then reductively released as an aldehyde. The oxidoreductases srdC, srdD and srdE then oxidize one of the hydroxy groups to facilitate the intramolecular aldol condensation, followed by dehydration to yield a salicylic aldehyde. This aldehyde can undergo facile reduction by endogenous reductases to yield the alcohol 1-hydroxy-2-hydroxymethyl-3-pent-1,3-dienylbenzene. The flavin-dependent srdI counteract against the propensity of the aldehydes to be reduced under physiological conditions and is responsible for reoxidizing 1-hydroxy-2-hydroxymethyl-3-pent-1,3-dienylbenzene back to the salicylic aldehyde. This salicylic aldehyde is then selectively epoxidized by the cupin-domain-containing oxidoreductase srdB to yield the epoxide, which can be hydrolyzed stereoselectively by the hydrolase srdG to give the final product sordarial. The polypeptide is Short-chain dehydrogenase srdC (Neurospora crassa (strain ATCC 24698 / 74-OR23-1A / CBS 708.71 / DSM 1257 / FGSC 987)).